The primary structure comprises 171 residues: MTEKNQDAVTEEQGTEVVLQIQRIYVKDVSFEAPNLPHIFQQEWKPKLDFNLSTETTHLAEDLYEVCLNISVETTMEGSEDVAFICEVKQAGIFAISGLEDVQLAHCLTSQCPNMLFPYARELISSLVNRGTFPALNLAPVNFDALFVEYMQRQQAQEESKTEEKEKKEVH.

Belongs to the SecB family. In terms of assembly, homotetramer, a dimer of dimers. One homotetramer interacts with 1 SecA dimer.

It localises to the cytoplasm. Its function is as follows. One of the proteins required for the normal export of preproteins out of the cell cytoplasm. It is a molecular chaperone that binds to a subset of precursor proteins, maintaining them in a translocation-competent state. It also specifically binds to its receptor SecA. This is Protein-export protein SecB from Histophilus somni (strain 2336) (Haemophilus somnus).